Consider the following 696-residue polypeptide: Junctophilin-2 (696 aa).

Over 1–674 the chain is Cytoplasmic; that stretch reads MSGGRFDFDD…EVEVEEVPNT (674 aa). MORN repeat units lie at residues 14-36, 38-59, 60-79, 82-104, 106-128, and 129-151; these read YCGG…KGQG, YSGS…SGNT, FEGY…TKGR, YKGE…NSGA, YEGT…DGGT, and YQGQ…PYGM. Residues serine 162 and serine 165 each carry the phosphoserine modification. Disordered regions lie at residues 164-192 and 246-273; these read SSLR…SPPV and LSSG…AAPF. MORN repeat units lie at residues 285–307 and 308–330; these read YMGE…SGLR and YEGE…DGHR. A Bipartite nuclear localization signal motif is present at residues 345–359; that stretch reads KRRVLPLKSSKVRQK. Residues 439 to 664 are disordered; the sequence is NSESLLEPPE…RKEVAQAKEA (226 aa). 3 positions are modified to phosphoserine: serine 440, serine 442, and serine 462. Over residues 457–471 the composition is skewed to basic and acidic residues; that stretch reads ERPRESPQLHERETP. Residue threonine 470 is modified to Phosphothreonine. A compositionally biased stretch (pro residues) spans 474 to 487; that stretch reads EGGPPSPAGTPPQP. The residue at position 479 (serine 479) is a Phosphoserine. A Phosphothreonine modification is found at threonine 483. The short motif at 488-492 is the Nuclear localization signal element; the sequence is KRPRP. Phosphoserine occurs at positions 527 and 533. Acidic residues predominate over residues 573 to 585; that stretch reads PLEDEQEPEPEPE. A phosphoserine mark is found at serine 593, serine 597, and serine 613. The segment covering 631–644 has biased composition (basic and acidic residues); that stretch reads AEPKAKARKTEARG. Residues 675 to 695 traverse the membrane as a helical; Anchor for type IV membrane protein segment; that stretch reads VLICMVILLNIGLAILFVHLL.

Belongs to the junctophilin family. As to quaternary structure, interacts with TRPC3. Interacts with BAG5 and HSPA8; the interaction with HSPA8 is increased in the presence of BAG5. In terms of assembly, interacts with MEF2C. Proteolytically cleaved by calpain in response to cardiac stress. The major cleavage site takes place at the C-terminus and leads to the release of the Junctophilin-2 N-terminal fragment chain (JP2NT). In terms of processing, phosphorylation on Ser-165, probably by PKC, affects RYR1-mediated calcium ion release, interaction with TRPC3, and skeletal muscle myotubule development. Abundantly expressed in skeletal muscle and heart. Weak expression in stomach and lung.

Its subcellular location is the cell membrane. The protein localises to the sarcoplasmic reticulum membrane. It is found in the endoplasmic reticulum membrane. The protein resides in the nucleus. Functionally, membrane-binding protein that provides a structural bridge between the plasma membrane and the sarcoplasmic reticulum and is required for normal excitation-contraction coupling in cardiomyocytes. Provides a structural foundation for functional cross-talk between the cell surface and intracellular Ca(2+) release channels by maintaining the 12-15 nm gap between the sarcolemma and the sarcoplasmic reticulum membranes in the cardiac dyads. Necessary for proper intracellular Ca(2+) signaling in cardiac myocytes via its involvement in ryanodine receptor-mediated calcium ion release. Contributes to the construction of skeletal muscle triad junctions. Its function is as follows. Transcription repressor required to safeguard against the deleterious effects of cardiac stress. Generated following cleavage of the Junctophilin-2 chain by calpain in response to cardiac stress in cardiomyocytes. Following cleavage and release from the membrane, translocates to the nucleus, binds DNA and represses expression of genes implicated in cell growth and differentiation, hypertrophy, inflammation and fibrosis. Modifies the transcription profile and thereby attenuates pathological remodeling in response to cardiac stress. Probably acts by competing with MEF2 transcription factors and TATA-binding proteins. This chain is Junctophilin-2, found in Mus musculus (Mouse).